The following is a 29-amino-acid chain: Kappa-theraphotoxin-Ps1a (29 aa).

3 disulfides stabilise this stretch: Cys-2–Cys-16, Cys-9–Cys-21, and Cys-15–Cys-25. Ile-29 is subject to Isoleucine amide.

Belongs to the neurotoxin 30 (phrixotoxin) family. In terms of tissue distribution, expressed by the venom gland.

The protein resides in the secreted. Functionally, potent and specific blocker of Kv4.2/KCND2 (IC(50)=5 nM) and Kv4.3/KCND3 (IC(50)=28 nM) potassium channels. Acts by altering the gating properties of these channels. Also shows moderate inhibition on human voltage-gated sodium channel Nav1.7/SCN9A activation (IC(50)=423 nM). The chain is Kappa-theraphotoxin-Ps1a from Paraphysa scrofa (Chilean copper tarantula).